The sequence spans 662 residues: FAST kinase domain-containing protein 3, mitochondrial (662 aa).

The 59-residue stretch at 591–649 (IALCIDGPKRFCSNSKHLLGKEAIKQRHLQLLGYQVVQIPYHEIGMLKSRRELVEYLQR) folds into the RAP domain.

The protein belongs to the FAST kinase family. As to expression, expression detected in spleen, thymus, testis, ovary, colon, heart, smooth muscle, kidney, brain, lung, liver and white adipose tissue with highest expression in liver and thyroid.

The protein localises to the mitochondrion. Functionally, required for normal mitochondrial respiration. Increases steady-state levels and half-lives of a subset of mature mitochondrial mRNAs MT-ND2, MT-ND3, MT-CYTB, MT-CO2, and MT-ATP8/6. Promotes MT-CO1 mRNA translation and increases mitochondrial complex IV assembly and activity. The sequence is that of FAST kinase domain-containing protein 3, mitochondrial (FASTKD3) from Homo sapiens (Human).